A 156-amino-acid polypeptide reads, in one-letter code: Small ribosomal subunit protein uS7 (156 aa).

This sequence belongs to the universal ribosomal protein uS7 family. As to quaternary structure, part of the 30S ribosomal subunit. Contacts proteins S9 and S11.

In terms of biological role, one of the primary rRNA binding proteins, it binds directly to 16S rRNA where it nucleates assembly of the head domain of the 30S subunit. Is located at the subunit interface close to the decoding center, probably blocks exit of the E-site tRNA. The sequence is that of Small ribosomal subunit protein uS7 from Afipia carboxidovorans (strain ATCC 49405 / DSM 1227 / KCTC 32145 / OM5) (Oligotropha carboxidovorans).